A 278-amino-acid polypeptide reads, in one-letter code: MIQEFIQGLHDFHFLQNALITAIVIGVVAGAVGCFIILRGMSLMGDAISHAVLPGVALSFILGINFFIGAITFGLLASIIITYIKGNSIIKSDTAIGITFSSFLALGIILISVAKSSTDLFHILFGNILAVQDLDMWISIGVGILVLLVISIFFKQLLLTSFDPLLAQAMGMKVNFYHYLLMILLTLVSVTAMQSVGTILIVAMLITPAATAYLYAKSLKTMILLSSALGAGASVLGLFIGYSFNVAAGSSIVLTSALIFLVSFFIAPKQRYLKRKVK.

The next 8 membrane-spanning stretches (helical) occupy residues 18–38, 61–81, 94–114, 134–154, 174–194, 196–216, 222–242, and 246–266; these read ALIT…FIIL, ILGI…SIII, TAIG…ISVA, LDMW…SIFF, VNFY…TAMQ, VGTI…YLYA, MILL…FIGY, and VAAG…SFFI.

This sequence belongs to the ABC-3 integral membrane protein family. As to quaternary structure, the complex is composed of two ATP-binding proteins (ScaC), two transmembrane proteins (ScaB) and a solute-binding protein (ScaA).

It localises to the cell membrane. Part of the high-affinity ABC transporter complex ScaABC involved in manganese import. Probably responsible for the translocation of the substrate across the membrane. Essential for growth under Mn(2+)-limiting conditions. In Streptococcus gordonii, this protein is Manganese import system permease protein ScaB.